The chain runs to 140 residues: Neurotrophin-7 (140 aa).

The propeptide occupies 1 to 7; it reads PGPRVRR. 3 disulfide bridges follow: Cys-21–Cys-101, Cys-64–Cys-129, and Cys-89–Cys-131.

The protein belongs to the NGF-beta family.

Its subcellular location is the secreted. This is Neurotrophin-7 (ntf7) from Cyprinus carpio (Common carp).